A 434-amino-acid polypeptide reads, in one-letter code: Potassium/proton antiporter CemA (434 aa).

5 helical membrane-spanning segments follow: residues 75–95, 210–230, 311–331, 359–379, and 395–415; these read LLEY…SLFF, LASL…SFFF, IVLH…LFIL, ILLL…EIVI, and ISCF…YLIF.

This sequence belongs to the CemA family.

It is found in the plastid. The protein localises to the chloroplast inner membrane. It carries out the reaction K(+)(in) + H(+)(out) = K(+)(out) + H(+)(in). Contributes to K(+)/H(+) antiport activity by supporting proton efflux to control proton extrusion and homeostasis in chloroplasts in a light-dependent manner to modulate photosynthesis. Prevents excessive induction of non-photochemical quenching (NPQ) under continuous-light conditions. Indirectly promotes efficient inorganic carbon uptake into chloroplasts. This is Potassium/proton antiporter CemA from Marchantia polymorpha (Common liverwort).